A 360-amino-acid polypeptide reads, in one-letter code: Membrane-bound lytic murein transglycosylase C (360 aa).

A signal peptide spans methionine 1–serine 16. Cysteine 17 is lipidated: N-palmitoyl cysteine. A lipid anchor (S-diacylglycerol cysteine) is attached at cysteine 17.

It belongs to the transglycosylase Slt family.

The protein localises to the cell outer membrane. It catalyses the reaction Exolytic cleavage of the (1-&gt;4)-beta-glycosidic linkage between N-acetylmuramic acid (MurNAc) and N-acetylglucosamine (GlcNAc) residues in peptidoglycan, from either the reducing or the non-reducing ends of the peptidoglycan chains, with concomitant formation of a 1,6-anhydrobond in the MurNAc residue.. Functionally, murein-degrading enzyme. May play a role in recycling of muropeptides during cell elongation and/or cell division. The polypeptide is Membrane-bound lytic murein transglycosylase C (Klebsiella pneumoniae subsp. pneumoniae (strain ATCC 700721 / MGH 78578)).